We begin with the raw amino-acid sequence, 254 residues long: E3 ubiquitin-protein ligase NEURL3 (254 aa).

The 158-residue stretch at 17–174 (ALSFHGDATG…TTKAIELLDP (158 aa)) folds into the NHR domain. The RING-type zinc finger occupies 197–236 (CVICFHNTANTRLMPCGHSQFCGSCAWHIFKDTARCPMCR).

The protein resides in the cytoplasm. The enzyme catalyses S-ubiquitinyl-[E2 ubiquitin-conjugating enzyme]-L-cysteine + [acceptor protein]-L-lysine = [E2 ubiquitin-conjugating enzyme]-L-cysteine + N(6)-ubiquitinyl-[acceptor protein]-L-lysine.. It participates in protein modification; protein ubiquitination. In terms of biological role, E3 ubiquitin-protein ligase that plays a role in various biological processes such as lung development or innate immunity. Seems to utilize UBE2E1. Promotes innate antiviral response by catalyzing 'Lys-63'-linked ubiquitination of IRF7. Also inhibits hepatitis C virus assembly by directly binding to viral E1 envelope glycoprotein to disrupt its interaction with E2. Plays an essential role in TLR4-mediated activation of MAPK pathways by promoting 'Lys-48'-linked polyubiquitination of the phosphatase DUSP1/MKP1. The sequence is that of E3 ubiquitin-protein ligase NEURL3 (Neurl3) from Rattus norvegicus (Rat).